The primary structure comprises 348 residues: MDDNKKKMLESALKSIDKAFGKGTLVRLGDKEVEKIDSISTGSVGLDIALGIGGVPKGRIVEIYGPESSGKTTLTLHIIAECQKKGGVCAFVDAEHALDVKYAANLGVDVDNLYVSQPDFGEQALDIVETLAKSGAIDLVVVDSVAALTPKSEIEGDMGDQHVGLQARLMSQALRKLTGVVHKMGTTVIFINQIRMKIGQMGYGSPETTTGGNALKFYASVRLDIRRIATLKQNDESIGNRAKVKVVKNKVAPPFKVAEFDIMFGEGISKMGELVDYGVKLDIVDKSGSWFSYKDKKLGQGRENAKIYLKENPKVADEILAAIREQMGSESLSSSSDDDDIKEESGEE.

65–72 (GPESSGKT) provides a ligand contact to ATP. The interval 326–348 (QMGSESLSSSSDDDDIKEESGEE) is disordered. The span at 336–348 (SDDDDIKEESGEE) shows a compositional bias: acidic residues.

This sequence belongs to the RecA family.

The protein localises to the cytoplasm. In terms of biological role, can catalyze the hydrolysis of ATP in the presence of single-stranded DNA, the ATP-dependent uptake of single-stranded DNA by duplex DNA, and the ATP-dependent hybridization of homologous single-stranded DNAs. It interacts with LexA causing its activation and leading to its autocatalytic cleavage. The protein is Protein RecA of Campylobacter hominis (strain ATCC BAA-381 / DSM 21671 / CCUG 45161 / LMG 19568 / NCTC 13146 / CH001A).